A 415-amino-acid polypeptide reads, in one-letter code: Ubp4-interactor sfp47 (415 aa).

Phosphoserine occurs at positions 221 and 226. Thr231 carries the post-translational modification Phosphothreonine. Ser235 carries the phosphoserine modification. The SH3 domain maps to 352 to 415; it reads PIFAYVRALY…PSNYIEELEY (64 aa).

Interacts with ubp4.

Its subcellular location is the cytoplasm. It localises to the endosome. Required for the regulation of activity and recruitment of ubp4 to endosomes. The protein is Ubp4-interactor sfp47 (sfp47) of Schizosaccharomyces pombe (strain 972 / ATCC 24843) (Fission yeast).